We begin with the raw amino-acid sequence, 365 residues long: Pyruvate dehydrogenase E1 component subunit beta, mitochondrial (365 aa).

The N-terminal 24 residues, methionine 1 to leucine 24, are a transit peptide targeting the mitochondrion. A thiamine diphosphate-binding site is contributed by glutamate 85. K(+) contacts are provided by isoleucine 138, alanine 186, isoleucine 187, and aspartate 189.

Thiamine diphosphate serves as cofactor. In terms of tissue distribution, expressed in salivary glands (at protein level).

It localises to the mitochondrion matrix. It catalyses the reaction N(6)-[(R)-lipoyl]-L-lysyl-[protein] + pyruvate + H(+) = N(6)-[(R)-S(8)-acetyldihydrolipoyl]-L-lysyl-[protein] + CO2. In terms of biological role, the pyruvate dehydrogenase complex catalyzes the overall conversion of pyruvate to acetyl-CoA and CO(2). Might play a role in regulating synapse structure formation at neuromuscular junctions. Might play a role in maintenance of mitochondrial morphology. The sequence is that of Pyruvate dehydrogenase E1 component subunit beta, mitochondrial from Drosophila melanogaster (Fruit fly).